We begin with the raw amino-acid sequence, 426 residues long: tRNA methyltransferase 10 homolog C (426 aa).

The N-terminal 41 residues, 1 to 41, are a transit peptide targeting the mitochondrion; that stretch reads MPVLLKMSVSITFLRPFARVLVPFTLHRKRRVLYSTIMQRY. Phosphoserine is present on S86. A coiled-coil region spans residues 138-166; sequence LYIKEKMKKARQIKKEMKKAEKEEPKKDQ. The region spanning 193–385 is the SAM-dependent MTase TRM10-type domain; that stretch reads MGWKGAQAMQ…KFVPSRKHAG (193 aa).

Belongs to the class IV-like SAM-binding methyltransferase superfamily. TRM10 family. Component of mitochondrial ribonuclease P, a complex composed of TRMT10C/MRPP1, HSD17B10/MRPP2 and PRORP/MRPP3. Interacts with HSD17B10/MRPP2; forming the MRPP1-MRPP2 subcomplex of the mitochondrial ribonuclease P complex. Interacts with GRSF1.

The protein resides in the mitochondrion matrix. The protein localises to the mitochondrion nucleoid. The enzyme catalyses adenosine(9) in tRNA + S-adenosyl-L-methionine = N(1)-methyladenosine(9) in tRNA + S-adenosyl-L-homocysteine + H(+). The catalysed reaction is guanosine(9) in tRNA + S-adenosyl-L-methionine = N(1)-methylguanosine(9) in tRNA + S-adenosyl-L-homocysteine + H(+). It carries out the reaction an adenosine in mRNA + S-adenosyl-L-methionine = an N(1)-methyladenosine in mRNA + S-adenosyl-L-homocysteine + H(+). Functionally, mitochondrial tRNA N(1)-methyltransferase involved in mitochondrial tRNA maturation. Component of mitochondrial ribonuclease P, a complex composed of TRMT10C/MRPP1, HSD17B10/MRPP2 and PRORP/MRPP3, which cleaves tRNA molecules in their 5'-ends. Together with HSD17B10/MRPP2, forms a subcomplex of the mitochondrial ribonuclease P, named MRPP1-MRPP2 subcomplex, which displays functions that are independent of the ribonuclease P activity. The MRPP1-MRPP2 subcomplex catalyzes the formation of N(1)-methylguanine and N(1)-methyladenine at position 9 (m1G9 and m1A9, respectively) in tRNAs; TRMT10C/MRPP1 acting as the catalytic N(1)-methyltransferase subunit. The MRPP1-MRPP2 subcomplex also acts as a tRNA maturation platform: following 5'-end cleavage by the mitochondrial ribonuclease P complex, the MRPP1-MRPP2 subcomplex enhances the efficiency of 3'-processing catalyzed by ELAC2, retains the tRNA product after ELAC2 processing and presents the nascent tRNA to the mitochondrial CCA tRNA nucleotidyltransferase TRNT1 enzyme. In addition to tRNA N(1)-methyltransferase activity, TRMT10C/MRPP1 also acts as a mRNA N(1)-methyltransferase by mediating methylation of adenosine residues at the N(1) position of MT-ND5 mRNA. Associates with mitochondrial DNA complexes at the nucleoids to initiate RNA processing and ribosome assembly. This chain is tRNA methyltransferase 10 homolog C, found in Bos taurus (Bovine).